We begin with the raw amino-acid sequence, 451 residues long: Phenylalanine--tRNA ligase, mitochondrial (451 aa).

Residues Ser-157–Gln-160, Arg-179, Gln-186–Tyr-188, and Gln-193–Glu-195 each bind substrate. Lys-202 bears the N6-acetyllysine mark. Residues Glu-287 and Phe-312 each coordinate substrate. Residues Ser-358–Arg-450 enclose the FDX-ACB domain.

Belongs to the class-II aminoacyl-tRNA synthetase family. In terms of assembly, monomer.

It is found in the mitochondrion matrix. It localises to the mitochondrion. It carries out the reaction tRNA(Phe) + L-phenylalanine + ATP = L-phenylalanyl-tRNA(Phe) + AMP + diphosphate + H(+). Is responsible for the charging of tRNA(Phe) with phenylalanine in mitochondrial translation. To a lesser extent, also catalyzes direct attachment of m-Tyr (an oxidized version of Phe) to tRNA(Phe), thereby opening the way for delivery of the misacylated tRNA to the ribosome and incorporation of ROS-damaged amino acid into proteins. This chain is Phenylalanine--tRNA ligase, mitochondrial (Fars2), found in Mus musculus (Mouse).